A 267-amino-acid chain; its full sequence is Undecaprenyl-diphosphatase (267 aa).

The next 8 helical transmembrane spans lie at 1 to 21 (MTYF…FLPI), 39 to 59 (QGLA…VIYF), 83 to 103 (SNLA…GLLF), 111 to 131 (LRSA…LWWV), 149 to 169 (ALFL…RSGI), 189 to 209 (FLMS…KLAM), 218 to 238 (LLST…HFFL), and 246 to 266 (MMPF…WLAL).

The protein belongs to the UppP family.

The protein resides in the cell inner membrane. The catalysed reaction is di-trans,octa-cis-undecaprenyl diphosphate + H2O = di-trans,octa-cis-undecaprenyl phosphate + phosphate + H(+). Catalyzes the dephosphorylation of undecaprenyl diphosphate (UPP). Confers resistance to bacitracin. The sequence is that of Undecaprenyl-diphosphatase from Aliivibrio fischeri (strain MJ11) (Vibrio fischeri).